The following is a 194-amino-acid chain: uncharacterized protein (194 aa).

The region spanning 6–66 (SGKYEKILQA…AIAENLLTHT (61 aa)) is the HTH tetR-type domain. Positions 29-48 (SISDIVKKAGTAQGTFYLYF) form a DNA-binding region, H-T-H motif.

This is an uncharacterized protein from Bacillus subtilis (strain 168).